The following is a 147-amino-acid chain: uncharacterized protein (147 aa).

To M.pneumoniae MPN_465.

This is an uncharacterized protein from Mycoplasma pneumoniae (strain ATCC 29342 / M129 / Subtype 1) (Mycoplasmoides pneumoniae).